The chain runs to 200 residues: Holliday junction branch migration complex subunit RuvA (200 aa).

The domain I stretch occupies residues 1-63 (MYAYVKGKLT…EDAQLLYGFS (63 aa)). Residues 64–142 (SEEEKDMFLS…ITEEDSDSLL (79 aa)) are domain II. Residues 143-149 (QVDATST) form a flexible linker region. The domain III stretch occupies residues 150-200 (VQDQFVQEAMLALEALGYSKRELAKVEKTLNKNKYDSVDEAVKAGLQLVVS).

This sequence belongs to the RuvA family. As to quaternary structure, homotetramer. Forms an RuvA(8)-RuvB(12)-Holliday junction (HJ) complex. HJ DNA is sandwiched between 2 RuvA tetramers; dsDNA enters through RuvA and exits via RuvB. An RuvB hexamer assembles on each DNA strand where it exits the tetramer. Each RuvB hexamer is contacted by two RuvA subunits (via domain III) on 2 adjacent RuvB subunits; this complex drives branch migration. In the full resolvosome a probable DNA-RuvA(4)-RuvB(12)-RuvC(2) complex forms which resolves the HJ.

Its subcellular location is the cytoplasm. Its function is as follows. The RuvA-RuvB-RuvC complex processes Holliday junction (HJ) DNA during genetic recombination and DNA repair, while the RuvA-RuvB complex plays an important role in the rescue of blocked DNA replication forks via replication fork reversal (RFR). RuvA specifically binds to HJ cruciform DNA, conferring on it an open structure. The RuvB hexamer acts as an ATP-dependent pump, pulling dsDNA into and through the RuvAB complex. HJ branch migration allows RuvC to scan DNA until it finds its consensus sequence, where it cleaves and resolves the cruciform DNA. This chain is Holliday junction branch migration complex subunit RuvA, found in Staphylococcus aureus (strain USA300).